The chain runs to 141 residues: VLTAEDRRLLQASVGKLGCRLEDIGADALNRLLIVFPQSKTYFSHFNLSPGSKDIVHQGEKVGKALDSALKHLDDIRGTLSQLSDLHAYNLRVDPVNFQLLSKCLHVSLATHLRNEYNASTCLAWDKFLEQVADVLCEKYR.

The region spanning 1-141 (VLTAEDRRLL…VADVLCEKYR (141 aa)) is the Globin domain. Heme b-binding residues include glutamine 58 and histidine 87.

This sequence belongs to the globin family. Heterotetramer of two alpha chains and two beta chains. Red blood cells.

Involved in oxygen transport from the lung to the various peripheral tissues. In Drymarchon melanurus erebennus (Texas indigo snake), this protein is Hemoglobin subunit alpha-D.